Consider the following 206-residue polypeptide: Large ribosomal subunit protein uL4 (206 aa).

The interval 63 to 97 (MYKQKGTGRARHHSARAPQFRGGGKAHGPVVRSHE) is disordered. Basic residues predominate over residues 64-77 (YKQKGTGRARHHSA).

The protein belongs to the universal ribosomal protein uL4 family. Part of the 50S ribosomal subunit.

Its function is as follows. One of the primary rRNA binding proteins, this protein initially binds near the 5'-end of the 23S rRNA. It is important during the early stages of 50S assembly. It makes multiple contacts with different domains of the 23S rRNA in the assembled 50S subunit and ribosome. Forms part of the polypeptide exit tunnel. This is Large ribosomal subunit protein uL4 from Rhizobium etli (strain CIAT 652).